The following is a 188-amino-acid chain: ATP synthase subunit delta (188 aa).

The protein belongs to the ATPase delta chain family. F-type ATPases have 2 components, F(1) - the catalytic core - and F(0) - the membrane proton channel. F(1) has five subunits: alpha(3), beta(3), gamma(1), delta(1), epsilon(1). F(0) has three main subunits: a(1), b(2) and c(10-14). The alpha and beta chains form an alternating ring which encloses part of the gamma chain. F(1) is attached to F(0) by a central stalk formed by the gamma and epsilon chains, while a peripheral stalk is formed by the delta and b chains.

The protein localises to the cell membrane. Its function is as follows. F(1)F(0) ATP synthase produces ATP from ADP in the presence of a proton or sodium gradient. F-type ATPases consist of two structural domains, F(1) containing the extramembraneous catalytic core and F(0) containing the membrane proton channel, linked together by a central stalk and a peripheral stalk. During catalysis, ATP synthesis in the catalytic domain of F(1) is coupled via a rotary mechanism of the central stalk subunits to proton translocation. In terms of biological role, this protein is part of the stalk that links CF(0) to CF(1). It either transmits conformational changes from CF(0) to CF(1) or is implicated in proton conduction. The sequence is that of ATP synthase subunit delta from Malacoplasma penetrans (strain HF-2) (Mycoplasma penetrans).